A 158-amino-acid chain; its full sequence is Endoribonuclease YbeY (158 aa).

Zn(2+)-binding residues include His119, His123, and His129.

This sequence belongs to the endoribonuclease YbeY family. The cofactor is Zn(2+).

The protein localises to the cytoplasm. Functionally, single strand-specific metallo-endoribonuclease involved in late-stage 70S ribosome quality control and in maturation of the 3' terminus of the 16S rRNA. The protein is Endoribonuclease YbeY of Acinetobacter baumannii (strain ACICU).